Here is a 311-residue protein sequence, read N- to C-terminus: Linearmycin resistance ATP-binding protein LnrL (311 aa).

The ABC transporter domain occupies Leu-2 to Thr-232. Residue Gly-34–Ser-41 coordinates ATP.

It belongs to the ABC transporter superfamily. As to quaternary structure, the complex is composed of two ATP-binding proteins (LnrL) and two transmembrane proteins (LnrM and LnrN).

In terms of biological role, required for resistance to linearmycins, a family of antibiotic-specialized metabolites produced by some streptomycetes. Part of the ABC transporter complex LnrLMN that probably facilitates linearmycin removal from the membrane. Responsible for energy coupling to the transport system. Also mediates KinC-dependent biofilm morphology. The polypeptide is Linearmycin resistance ATP-binding protein LnrL (Bacillus subtilis (strain 168)).